The chain runs to 309 residues: Formate-nitrite transporter (309 aa).

The Cytoplasmic portion of the chain corresponds to 1–19; the sequence is MPPNNSKYVLDPVSIKSVC. Positions 20–35 form an intramembrane region, helical; it reads GGEESYIRCVEYGKKK. The Cytoplasmic segment spans residues 36-40; the sequence is AHYSN. Residues 41–68 traverse the membrane as a helical segment; that stretch reads LNLLAKAILAGMFVGLCAHASGIAGGLF. The Extracellular portion of the chain corresponds to 69–79; the sequence is YYHKLREIVGA. Residues 80 to 100 traverse the membrane as a helical segment; it reads SMSVFVYGFTFPIAFMCIICT. At 101 to 122 the chain is on the cytoplasmic side; that stretch reads GSDLFTGNTLAVTMALYEKKVK. Residues 123–150 form a helical membrane-spanning segment; the sequence is LLDYLRVMTISLFGNYVGAVSFAFFVSY. Over 151-163 the chain is Extracellular; it reads LSGAFTNVHAVEK. The segment at residues 164–179 is an intramembrane region (helical); the sequence is NHFFQFLNDIAEKKVH. Topologically, residues 180-181 are extracellular; sequence HT. A helical transmembrane segment spans residues 182–206; the sequence is FVECVSLAVGCNIFVCLAVYFVLTL. Topologically, residues 207-209 are cytoplasmic; it reads KDG. Residues 210-226 form a helical membrane-spanning segment; it reads AGYVFSVFFAVYAFAIA. Residues 227–249 lie on the Extracellular side of the membrane; that stretch reads GYEHIIANIYTLNIALMVNTKIT. The chain crosses the membrane as a helical span at residues 250–280; it reads VYQAYIKNLLPTLLGNYIAGAIVLGLPLYFI. The Cytoplasmic portion of the chain corresponds to 281-309; it reads YKEHYYNFERSKRDNNDAQMKSLSIELRN.

It belongs to the FNT transporter (TC 1.A.16) family. In terms of assembly, homopentamer.

It is found in the cell membrane. The protein resides in the vacuole membrane. The catalysed reaction is (S)-lactate(in) + H(+)(in) = (S)-lactate(out) + H(+)(out). It carries out the reaction formate(in) + H(+)(in) = formate(out) + H(+)(out). The enzyme catalyses pyruvate(out) + H(+)(out) = pyruvate(in) + H(+)(in). It catalyses the reaction acetate(out) + H(+)(out) = acetate(in) + H(+)(in). Inhibited by diethylpyrocarbonate (DEPC). Protonophores, such as 2,4-dinitrophenol and carbonylcyanide-3-chlorophenylhydrazone, abolish transport. Inhibited by phloretin, furosemide, alpha-cyano-4-hydroxy-cinnamate and alpha-fluorocinnamate. Inhibited by the Malaria Box compound MMV007839 and its derivatives BH296 and BH267.meta. Inhibited by the Malaria Box compound MMV000972. Inhibited by broad-specificity anion transport inhibitor NPPB. In terms of biological role, monocarboxylate-proton symporter that mediates the efflux of the waste product lactate in the intraerythrocytic parasites; active in acidic-to-neutral pH range. Transports L-lactate. Transports D-lactate, pyruvate, acetate and formate. Essential for asexual growth but dispensable for the development of gametocytes. This Plasmodium falciparum (isolate 3D7) protein is Formate-nitrite transporter.